A 511-amino-acid polypeptide reads, in one-letter code: 3-octaprenyl-4-hydroxybenzoate carboxy-lyase (511 aa).

Position 176 (Asn-176) interacts with Mn(2+). Prenylated FMN contacts are provided by residues 179–181 (IYR), 193–195 (RWL), and 198–199 (RG). Glu-242 contacts Mn(2+). The active-site Proton donor is the Asp-311.

The protein belongs to the UbiD family. In terms of assembly, homohexamer. The cofactor is prenylated FMN. Mn(2+) is required as a cofactor.

Its subcellular location is the cell membrane. The catalysed reaction is a 4-hydroxy-3-(all-trans-polyprenyl)benzoate + H(+) = a 2-(all-trans-polyprenyl)phenol + CO2. Its pathway is cofactor biosynthesis; ubiquinone biosynthesis. In terms of biological role, catalyzes the decarboxylation of 3-octaprenyl-4-hydroxy benzoate to 2-octaprenylphenol, an intermediate step in ubiquinone biosynthesis. This Laribacter hongkongensis (strain HLHK9) protein is 3-octaprenyl-4-hydroxybenzoate carboxy-lyase.